Here is a 765-residue protein sequence, read N- to C-terminus: Putative chloride channel-like protein CLC-g (765 aa).

The next 12 helical transmembrane spans lie at 67–87, 116–136, 167–187, 190–210, 232–252, 262–282, 315–335, 355–375, 438–458, 462–482, 494–514, and 515–535; these read VFMKWLLCFCIGIIVSLIGFA, FVVFSVTNLILTLFASVITAF, LIIKIIGNISAVSASLLIGKA, MVHTGACVASILGQGGSKRYR, GAAAGIAASFRAPVGGVLFAL, ALLWRIFFSTAVVAIVLRALI, VLPVLLLGVVGGILGSLYNFL, ILLACAISIFTSCLLFGLPFL, FSVLVFFVTCFFLSIFSYGIV, GLFVPVIVTGASYGRFVGMLL, AVLGAASFLGGTMRMTVSTCV, and ILLELTNNLLLLPMMMVVLLI. One can recognise a CBS 1 domain in the interval 568–640; sequence MRQLLVGDVV…LLKKRVFMPS (73 aa). S646 carries the phosphoserine modification. In terms of domain architecture, CBS 2 spans 687 to 748; it reads FSNASPYTVV…PEHILGLHPS (62 aa). The chain crosses the membrane as a helical span at residues 715–735; that stretch reads HLLVIPKTSNRPPVVGILTRH.

This sequence belongs to the chloride channel (TC 2.A.49) family. Homodimer. Interacts with PP2A5.

The protein resides in the membrane. Its function is as follows. Putative voltage-gated chloride channel. This Arabidopsis thaliana (Mouse-ear cress) protein is Putative chloride channel-like protein CLC-g (CLC-G).